The chain runs to 3419 residues: Genome polyprotein (3419 aa).

Positions 1-25 (MKNPKEEIRRIRIVNMLKRGVARVN) are disordered. At 1–104 (MKNPKEEIRR…INARKERKRR (104 aa)) the chain is on the cytoplasmic side. Residues 37-72 (LLLGHGPIRMVLAILAFLRFTAIKPSLGLINRWGSV) form a hydrophobic; homodimerization of capsid protein C region. A propeptide spans 105–122 (GADTSIGIIGLLLTTAMA) (ER anchor for capsid protein C, removed in mature form by serine protease NS3). Residues 105–125 (GADTSIGIIGLLLTTAMAAEI) traverse the membrane as a helical segment. The Extracellular segment spans residues 126–249 (TRRGSAYYMY…YTKHLIKVEN (124 aa)). Residue N192 is glycosylated (N-linked (GlcNAc...) asparagine; by host). The helical transmembrane segment at 250–269 (WIFRNPGFALVAVAIAWLLG) threads the bilayer. At 270 to 274 (SSTSQ) the chain is on the cytoplasmic side. A helical transmembrane segment spans residues 275 to 290 (KVIYLVMILLIAPAYS). Residues 291–741 (IRCIGVSNRD…HQIFGAAFKS (451 aa)) are Extracellular-facing. A disulfide bridge connects residues C293 and C320. A Glycyl lysine isopeptide (Lys-Gly) (interchain with G-Cter in ubiquitin) cross-link involves residue K328. 7 cysteine pairs are disulfide-bonded: C350/C406, C350/C411, C364/C395, C382/C406, C382/C411, C476/C577, and C594/C625. The tract at residues 388–401 (DRGWGNGCGLFGKG) is fusion peptide. Residue K567 forms a Glycyl lysine isopeptide (Lys-Gly) (interchain with G-Cter in ubiquitin) linkage. A helical membrane pass occupies residues 742–763 (LFGGMSWFSQILIGTLLVWLGL). Topologically, residues 764–769 (NTKNGS) are cytoplasmic. A helical transmembrane segment spans residues 770-790 (ISLTCLALGGVMIFLSTAVSA). Residues 791–1173 (DVGCSVDFSK…EGLKKRMTTK (383 aa)) lie on the Lumenal side of the membrane. 6 disulfide bridges follow: C794–C805, C845–C933, C969–C1013, C1070–C1119, C1081–C1102, and C1103–C1106. 2 N-linked (GlcNAc...) asparagine; by host glycosylation sites follow: N920 and N997. A helical membrane pass occupies residues 1174–1194 (IIMSTSMAVLVVMILGGFSMS). Over 1195–1216 (DLAKLVILMGATFAEMNTGGDV) the chain is Cytoplasmic. The helical transmembrane segment at 1217–1237 (AHLALVAAFKVRPALLVSFIF) threads the bilayer. Topologically, residues 1238 to 1266 (RANWTPRESMLLALASCLLQTAISALEGD) are lumenal. Residues 1267–1287 (LMVLINGFALAWLAIRAMAVP) form a helical membrane-spanning segment. Over 1288 to 1291 (RTDN) the chain is Cytoplasmic. Residues 1292–1312 (IALPILAALTPLARGTLLVAW) form a helical membrane-spanning segment. Residues 1313–1341 (RAGLATCGGIMLLSLKGKGSVKKNLPFVM) lie on the Lumenal side of the membrane. Residues 1342–1362 (ALGLTAVRVVDPINVVGLLLL) form a helical membrane-spanning segment. The Cytoplasmic segment spans residues 1363–1369 (TRSGKRS). The chain crosses the membrane as a helical span at residues 1370-1390 (WPPSEVLTAVGLICALAGGFA). Residues 1391–1393 (KAD) lie on the Lumenal side of the membrane. A helical membrane pass occupies residues 1394 to 1414 (IEMAGPMAAVGLLIVSYVVSG). Over 1415-1468 (KSVDMYIERAGDITWEKDAEVTGNSPRLDVALDESGDFSLVEEDGPPMREIILK) the chain is Cytoplasmic. Residues 1421-1460 (IERAGDITWEKDAEVTGNSPRLDVALDESGDFSLVEEDGP) are interacts with and activates NS3 protease. Residues 1425 to 1447 (GDITWEKDAEVTGNSPRLDVALD) form a disordered region. Residues 1469-1489 (VVLMAICGMNPIAIPFAAGAW) constitute an intramembrane region (helical). The Lumenal segment spans residues 1490 to 2166 (YVYVKTGKRS…KAAAAQLPET (677 aa)). The 178-residue stretch at 1499–1676 (SGALWDVPAP…KREEETPVEC (178 aa)) folds into the Peptidase S7 domain. Residues H1549, D1573, and S1633 each act as charge relay system; for serine protease NS3 activity in the active site. A Helicase ATP-binding domain is found at 1679–1835 (PSMLKKKQLT…DSNSPIMDTE (157 aa)). The important for RNA-binding stretch occupies residues 1683 to 1686 (KKKQ). ATP is bound at residue 1692 to 1699 (LHPGAGKT). Residues 1783 to 1786 (DEAH) carry the DEAH box motif. Residues 1830-2009 (PIMDTEVEVP…GLIASLYRPE (180 aa)) enclose the Helicase C-terminal domain. Residue K1887 is modified to N6-acetyllysine; by host. The helical transmembrane segment at 2167–2187 (LETIMLLGLLGTVSLGIFFVL) threads the bilayer. Residues 2188 to 2191 (MRNK) are Lumenal-facing. An intramembrane region (helical) is located at residues 2192 to 2212 (GIGKMGFGMVTLGASAWLMWL). Over 2213-2214 (SE) the chain is Cytoplasmic. A helical transmembrane segment spans residues 2215 to 2235 (IEPARIACVLIVVFLLLVVLI). Over 2236–2250 (PEPEKQRSPQDNQMA) the chain is Lumenal. Positions 2251 to 2265 (IIIMVAVGLLGLITA) form an intramembrane region, helical. Residues 2266-2303 (NELGWLERTKNDIAHLMGRREEGATMGFSMDIDLRPAS) lie on the Lumenal side of the membrane. The segment at residues 2304 to 2324 (AWAIYAALTTLITPAVQHAVT) is an intramembrane region (helical). Topologically, residues 2325-2340 (TSYNNYSLMAMATQAG) are lumenal. Residues 2341 to 2361 (VLFGMGKGMPFMHGDLGVPLL) form a helical membrane-spanning segment. Residues 2362-2371 (MMGCYSQLTP) are Cytoplasmic-facing. The helical transmembrane segment at 2372–2392 (LTLIVAIILLVAHYMYLIPGL) threads the bilayer. Topologically, residues 2393 to 2437 (QAAAARAAQKRTAAGIMKNPVVDGIVVTDIDTMTIDPQVEKKMGQ) are lumenal. Residues 2438-2458 (VLLIAVAISSAVLLRTAWGWG) form a helical membrane-spanning segment. Over 2459-3419 (EAGALITAAT…GEEGSTPGVL (961 aa)) the chain is Cytoplasmic. An mRNA cap 0-1 NS5-type MT domain is found at 2517-2781 (GGGTGETLGE…DVNLGSGTRA (265 aa)). The mRNA site is built by K2529, L2532, N2533, M2535, F2540, and K2544. Residue 2529-2535 (KARLNQM) participates in GTP binding. S2572 lines the S-adenosyl-L-methionine pocket. Position 2572 is a phosphoserine (S2572). K2577 functions as the For 2'-O-MTase activity in the catalytic mechanism. The segment at 2593 to 2596 (VVDL) is SUMO-interacting motif (SIM). Residues G2602, W2603, T2620, K2621, H2626, E2627, D2647, V2648, D2662, and I2663 each coordinate S-adenosyl-L-methionine. Residue D2662 is the For 2'-O-MTase activity of the active site. GTP is bound at residue 2665–2671 (ESSSSPE). S2666 contributes to the mRNA binding site. K2698 (for 2'-O-MTase activity) is an active-site residue. R2729 and S2731 together coordinate mRNA. 2729–2731 (RNS) serves as a coordination point for GTP. The active-site For 2'-O-MTase activity is the E2734. Y2736 is an S-adenosyl-L-methionine binding site. The Nuclear localization signal (NLS) signature appears at 2904–2910 (KRKRPRV). Zn(2+)-binding residues include E2955, H2959, C2964, and C2967. In terms of domain architecture, RdRp catalytic spans 3045-3195 (GKMYADDTAG…KPIDDRFAHA (151 aa)). H3230, C3246, and C3365 together coordinate Zn(2+).

This sequence in the N-terminal section; belongs to the class I-like SAM-binding methyltransferase superfamily. mRNA cap 0-1 NS5-type methyltransferase family. Homodimer. Interacts with host SERTAD3; this interaction promotes capsid protein C degradation. Interacts with host CAPRIN1; this interaction is probably linked to the inhibition of stress granules formation by the virus. Interacts with host G3BP1; this interaction is probably linked to the inhibition of stress granules formation by the virus. As to quaternary structure, forms heterodimers with envelope protein E in the endoplasmic reticulum and Golgi. Interacts with non-structural protein 2A. In terms of assembly, homodimer; in the endoplasmic reticulum and Golgi. Interacts with host TYRO3, AXL and DC-SIGN proteins. Interacts with non-structural protein 2A. Interacts with host HAVCR1; this interaction likely mediates virus attachment to host cell. Interacts with host NCAM1. Interacts with host HSPA5. Interacts with Aedes aegypti SRPN25, APY and venom allergen-1 salivary proteins; the interactions do not affect Zika virus replication in human endothelial cells and keratinocytes. Homodimer; Homohexamer when secreted. Interacts with host TBK1. Interacts with host USP8. Interacts with envelope protein E. Interacts with host HSPA5. As to quaternary structure, interacts with the structural protein prM/E complex, and the NS2B/NS3 protease complex. In terms of assembly, forms a heterodimer with serine protease NS3. May form homooligomers. Interacts with human SPCS1. Interacts with non-structural protein 2A. Forms a heterodimer with NS2B. Interacts with NS4B. Interacts with unphosphorylated RNA-directed RNA polymerase NS5; this interaction stimulates RNA-directed RNA polymerase NS5 guanylyltransferase activity. Interacts with non-structural protein 2A. Interacts with host SHFL; this interaction promotes NS3 degradation via a lysosome-dependent pathway. Interacts with host CEP63; this interaction disorganizes the centrosome and inhibits host innate immune response. As to quaternary structure, may interact with host ANKLE2; the interaction may cause defects in brain development, such as microcephaly. May interact with host SRPRA and SEC61G. In terms of assembly, interacts with serine protease NS3. Interacts with NS1. Interacts with host TBK1. Homodimer. Interacts with host STAT2; this interaction inhibits the phosphorylation of the latter, and, when all viral proteins are present (polyprotein), targets STAT2 for degradation. Interacts with host TBK1 and IKBKE; these interactions lead to the inhibition of the host RIG-I signaling pathway. Interacts with host KPNA2. Interacts with host PAF1 complex; the interaction may prevent the recruitment of the host PAF1 complex to interferon-responsive genes, and thus reduces the immune response. Interacts with serine protease NS3. Interacts with host ZSWIM8; this interaction allows STAT2 binding to ZSWIM8 and subsequent proteasomal degradation leading to inhibition of interferon signaling. In terms of processing, specific enzymatic cleavages in vivo yield mature proteins. Cleavages in the lumen of endoplasmic reticulum are performed by host signal peptidase, whereas cleavages in the cytoplasmic side are performed by serine protease NS3. Signal cleavage at the 2K-4B site requires a prior NS3 protease-mediated cleavage at the 4A-2K site. Cleaved in post-Golgi vesicles by a host furin, releasing the mature small envelope protein M, and peptide pr. This cleavage is incomplete as up to 30% of viral particles still carry uncleaved prM. Post-translationally, N-glycosylation plays a role in virulence in mammalian and mosquito hosts, but may have no effect on neurovirulence. In terms of processing, ubiquitination by host TRIM7 promotes virus attachment and fusion of the virus and the host endosome membrane. N-glycosylated. The excreted form is glycosylated, which is required for efficient secretion of the protein from infected cells. Post-translationally, acetylated by host KAT5. Acetylation modulates NS3 RNA-binding and unwinding activities and plays an important positive role for viral replication. In terms of processing, phosphorylated on serines residues. This phosphorylation may trigger NS5 nuclear localization. Sumoylated, required for regulating IFN induced interferon stimulated genes/ISGs.

It localises to the virion. The protein resides in the host nucleus. It is found in the host cytoplasm. Its subcellular location is the host perinuclear region. The protein localises to the secreted. It localises to the virion membrane. The protein resides in the host endoplasmic reticulum membrane. The catalysed reaction is Selective hydrolysis of -Xaa-Xaa-|-Yaa- bonds in which each of the Xaa can be either Arg or Lys and Yaa can be either Ser or Ala.. It carries out the reaction RNA(n) + a ribonucleoside 5'-triphosphate = RNA(n+1) + diphosphate. It catalyses the reaction a ribonucleoside 5'-triphosphate + H2O = a ribonucleoside 5'-diphosphate + phosphate + H(+). The enzyme catalyses ATP + H2O = ADP + phosphate + H(+). The catalysed reaction is a 5'-end (5'-triphosphoguanosine)-ribonucleoside in mRNA + S-adenosyl-L-methionine = a 5'-end (N(7)-methyl 5'-triphosphoguanosine)-ribonucleoside in mRNA + S-adenosyl-L-homocysteine. It carries out the reaction a 5'-end (N(7)-methyl 5'-triphosphoguanosine)-ribonucleoside in mRNA + S-adenosyl-L-methionine = a 5'-end (N(7)-methyl 5'-triphosphoguanosine)-(2'-O-methyl-ribonucleoside) in mRNA + S-adenosyl-L-homocysteine + H(+). Plays a role in virus budding by binding to the host cell membrane and packages the viral RNA into a nucleocapsid that forms the core of the mature virus particle. During virus entry, may induce genome penetration into the host cytoplasm after hemifusion induced by the surface proteins. Can migrate to the cell nucleus where it modulates host functions. Inhibits the integrated stress response (ISR) in the infected cell. Its function is as follows. Inhibits RNA silencing by interfering with host Dicer. Functionally, prevents premature fusion activity of envelope proteins in trans-Golgi by binding to envelope protein E at pH 6.0. After virion release in extracellular space, gets dissociated from E dimers. In terms of biological role, plays a role in host immune defense modulation and protection of envelope protein E during virion synthesis. PrM-E cleavage is inefficient, many virions are only partially matured and immature prM-E proteins could play a role in immune evasion. Contributes to fetal microcephaly in humans. Acts as a chaperone for envelope protein E during intracellular virion assembly by masking and inactivating envelope protein E fusion peptide. prM is the only viral peptide matured by host furin in the trans-Golgi network probably to avoid catastrophic activation of the viral fusion activity in acidic Golgi compartment prior to virion release. May play a role in virus budding. Exerts cytotoxic effects by activating a mitochondrial apoptotic pathway through M ectodomain. May display a viroporin activity. Its function is as follows. Binds to host cell surface receptors and mediates fusion between viral and cellular membranes. Efficient virus attachment to cell is, at least in part, mediated by host HAVCR1 in a cell-type specific manner. In addition, host NCAM1 can also be used as entry receptor. Interaction with host HSPA5 plays an important role in the early stages of infection as well. Envelope protein is synthesized in the endoplasmic reticulum and forms a heterodimer with protein prM. The heterodimer plays a role in virion budding in the ER, and the newly formed immature particle is covered with 60 spikes composed of heterodimers between precursor prM and envelope protein E. The virion is transported to the Golgi apparatus where the low pH causes the dissociation of PrM-E heterodimers and formation of E homodimers. PrM-E cleavage is inefficient, many virions are only partially matured and immature prM-E proteins could play a role in immune evasion. Functionally, plays a role in the inhibition of host RLR-induced interferon-beta activation by targeting TANK-binding kinase 1/TBK1. In addition, recruits the host deubiquitinase USP8 to cleave 'Lys-11'-linked polyubiquitin chains from caspase-1/CASP1 thus inhibiting its proteasomal degradation. In turn, stabilized CASP1 promotes cleavage of cGAS, which inhibits its ability to recognize mitochondrial DNA release and initiate type I interferon signaling. In terms of biological role, component of the viral RNA replication complex that recruits genomic RNA, the structural protein prM/E complex, and the NS2B/NS3 protease complex to the virion assembly site and orchestrates virus morphogenesis. Antagonizes also the host MDA5-mediated induction of alpha/beta interferon antiviral response. May disrupt adherens junction formation and thereby impair proliferation of radial cells in the host cortex. Required cofactor for the serine protease function of NS3. Its function is as follows. Displays three enzymatic activities: serine protease, NTPase and RNA helicase. NS3 serine protease, in association with NS2B, performs its autocleavage and cleaves the polyprotein at dibasic sites in the cytoplasm: C-prM, NS2A-NS2B, NS2B-NS3, NS3-NS4A, NS4A-2K and NS4B-NS5. NS3 RNA helicase binds RNA and unwinds dsRNA in the 3' to 5' direction. Leads to translation arrest when expressed ex vivo. Disrupts host centrosome organization in a CEP63-dependent manner to degrade host TBK1 and inhibits innate immune response. Inhibits the integrated stress response (ISR) in the infected cell. Functionally, regulates the ATPase activity of the NS3 helicase activity. NS4A allows NS3 helicase to conserve energy during unwinding. Cooperatively with NS4B suppresses the Akt-mTOR pathway and leads to cellular dysregulation. By inhibiting host ANKLE2 functions, may cause defects in brain development, such as microcephaly. Also antagonizes the host MDA5-mediated induction of alpha/beta interferon antiviral response. Inhibits the integrated stress response (ISR) in the infected cell. In terms of biological role, functions as a signal peptide for NS4B and is required for the interferon antagonism activity of the latter. Induces the formation of ER-derived membrane vesicles where the viral replication takes place. Also plays a role in the inhibition of host RLR-induced interferon-beta production at TANK-binding kinase 1/TBK1 level. Cooperatively with NS4A suppresses the Akt-mTOR pathway and leads to cellular dysregulation. Its function is as follows. Replicates the viral (+) and (-) RNA genome, and performs the capping of genomes in the cytoplasm. Methylates viral RNA cap at guanine N-7 and ribose 2'-O positions. Once sufficient NS5 is expressed, binds to the cap-proximal structure and inhibits further translation of the viral genome. Besides its role in RNA genome replication, also prevents the establishment of a cellular antiviral state by blocking the interferon-alpha/beta (IFN-alpha/beta) signaling pathway. Mechanistically, interferes with host kinases TBK1 and IKKE upstream of interferon regulatory factor 3/IRF3 to inhibit the RIG-I pathway. Also antagonizes type I interferon signaling by targeting STAT2 for degradation by the proteasome thereby preventing activation of JAK-STAT signaling pathway. Mechanistically, acts as a scaffold protein to connect host ZSWIM8/CUL3 ligase complex and STAT2, leading to STAT2 degradation. Within the host nucleus, disrupts host SUMO1 and STAT2 co-localization with PML, resulting in PML degradation. May also reduce immune responses by preventing the recruitment of the host PAF1 complex to interferon-responsive genes. The polypeptide is Genome polyprotein (Aedes aegypti (Yellowfever mosquito)).